A 421-amino-acid chain; its full sequence is MHRQSSKSGVALPPVGQGPDACQMLSRAQLGQDPPQRTVLGVLTENEQYRRTCGQEITAIRCFSGSENVFPAAGKKVLSDHGVNEPAKRGFDIYMDDPEQGDRDTCSGKEGIIFEDVYEVDTSMLKSDLHFLLDFNTVSPMLVDPTTHAQSEEATDFGSDVINVTEYAEEIHRYLREAEVRHRPKAHYMRKQPDITEGMRAILVDWLVEVGEEYKLRTETLYLAVNFLDRFLSCMSVLRGKLQLVGTAAILLASKYEEIYPPDVDEFVYITDDTYTKRQLLRMEHLLLKVLAFDLTVPTTNQFLLQYLRRQGVCIRTENLAKYVAELSLLEADPFLKYLPSLVAAAAYCLANYIVNRHFWPETLAAFTGYSLNEIVPCLSELHKACLSIPHRPQQAIREKYKASKYLHVSLMEPPVVLPLQ.

The segment at Met-1 to Ala-21 is disordered.

This sequence belongs to the cyclin family. Cyclin AB subfamily. As to quaternary structure, interacts with INCA1 and KLHDC9. Interacts with the CDK2 and CDC2 protein kinases to form a serine/threonine kinase holoenzyme complex. The cyclin subunit imparts substrate specificity to the complex. Found in a complex with CDK2, CABLES1 and CCNE1. Polyubiquitinated via 'Lys-11'-linked ubiquitin by the anaphase-promoting complex (APC/C), leading to its degradation by the proteasome. Deubiquitinated and stabilized by USP37 enables entry into S phase. Ubiquitinated during the G1 phase by the SCF(FBXO31) complex, leading to its proteasomal degradation. As to expression, testis and ovaries.

It is found in the nucleus. The protein localises to the cytoplasm. It localises to the cytoskeleton. The protein resides in the spindle. May be involved in the control of the cell cycle at the G1/S (start) and G2/M (mitosis) transitions. May primarily function in the control of the germline meiotic cell cycle and additionally in the control of mitotic cell cycle in some somatic cells. The chain is Cyclin-A1 (Ccna1) from Mus musculus (Mouse).